The chain runs to 872 residues: Tetratricopeptide repeat protein 16 (872 aa).

Residues 1 to 20 form a disordered region; it reads MTDSDEDALKVDQGPSQDIP. TPR repeat units lie at residues 61–94, 96–128, 136–169, 251–284, 285–318, 331–364, 365–398, and 406–439; these read VREY…DPQL, DFYA…QQDN, TFVL…QPEK, AQQA…NPLD, PSFF…VTED, LLTY…EQQE, KGLY…SPQD, and GLLQ…NPQK. 2 disordered regions span residues 557–640 and 653–872; these read ATPE…ETET and TAMT…YEVL. Residues 577 to 590 show a composition bias toward acidic residues; sequence KEEEEKEEEEQKEE. A compositionally biased stretch (basic and acidic residues) spans 591 to 604; it reads EEQKKEEKKEEKKP. Polar residues-rich tracts occupy residues 610-640, 653-675, 689-709, and 721-754; these read KVAS…ETET, TAMT…NNRE, GQRQ…NFSK, and KTKA…SQGP. Positions 762 to 783 are enriched in basic residues; sequence KTTRSPRQRPRKVKAARGRSWR. 2 stretches are compositionally biased toward polar residues: residues 799 to 827 and 839 to 861; these read RSST…GQRT and GMSS…SKTE.

This chain is Tetratricopeptide repeat protein 16 (TTC16), found in Macaca fascicularis (Crab-eating macaque).